Consider the following 156-residue polypeptide: Small ribosomal subunit protein uS7 (156 aa).

Belongs to the universal ribosomal protein uS7 family. In terms of assembly, part of the 30S ribosomal subunit. Contacts proteins S9 and S11.

Its function is as follows. One of the primary rRNA binding proteins, it binds directly to 16S rRNA where it nucleates assembly of the head domain of the 30S subunit. Is located at the subunit interface close to the decoding center, probably blocks exit of the E-site tRNA. This Hamiltonella defensa subsp. Acyrthosiphon pisum (strain 5AT) protein is Small ribosomal subunit protein uS7.